The primary structure comprises 298 residues: Aspartate carbamoyltransferase catalytic subunit (298 aa).

Carbamoyl phosphate-binding residues include arginine 50 and threonine 51. Lysine 79 lines the L-aspartate pocket. The carbamoyl phosphate site is built by arginine 100, histidine 128, and glutamine 131. Arginine 161 and arginine 220 together coordinate L-aspartate. Carbamoyl phosphate-binding residues include leucine 259 and proline 260.

Belongs to the aspartate/ornithine carbamoyltransferase superfamily. ATCase family. Heterooligomer of catalytic and regulatory chains.

It catalyses the reaction carbamoyl phosphate + L-aspartate = N-carbamoyl-L-aspartate + phosphate + H(+). It functions in the pathway pyrimidine metabolism; UMP biosynthesis via de novo pathway; (S)-dihydroorotate from bicarbonate: step 2/3. Catalyzes the condensation of carbamoyl phosphate and aspartate to form carbamoyl aspartate and inorganic phosphate, the committed step in the de novo pyrimidine nucleotide biosynthesis pathway. This chain is Aspartate carbamoyltransferase catalytic subunit, found in Sulfurisphaera tokodaii (strain DSM 16993 / JCM 10545 / NBRC 100140 / 7) (Sulfolobus tokodaii).